Reading from the N-terminus, the 75-residue chain is UPF0352 protein YejL (75 aa).

It belongs to the UPF0352 family.

The protein is UPF0352 protein YejL of Shigella sonnei (strain Ss046).